The sequence spans 377 residues: tRNA/tmRNA (uracil-C(5))-methyltransferase (377 aa).

S-adenosyl-L-methionine contacts are provided by Gln199, Tyr227, Asn232, Glu248, and Asp308. Catalysis depends on Cys333, which acts as the Nucleophile. Glu367 (proton acceptor) is an active-site residue.

The protein belongs to the class I-like SAM-binding methyltransferase superfamily. RNA M5U methyltransferase family. TrmA subfamily.

It carries out the reaction uridine(54) in tRNA + S-adenosyl-L-methionine = 5-methyluridine(54) in tRNA + S-adenosyl-L-homocysteine + H(+). The enzyme catalyses uridine(341) in tmRNA + S-adenosyl-L-methionine = 5-methyluridine(341) in tmRNA + S-adenosyl-L-homocysteine + H(+). In terms of biological role, dual-specificity methyltransferase that catalyzes the formation of 5-methyluridine at position 54 (m5U54) in all tRNAs, and that of position 341 (m5U341) in tmRNA (transfer-mRNA). The polypeptide is tRNA/tmRNA (uracil-C(5))-methyltransferase (Aeromonas salmonicida (strain A449)).